The primary structure comprises 211 residues: Glutathione S-transferase class-mu 28 kDa isozyme (211 aa).

One can recognise a GST N-terminal domain in the interval 4-86; sequence DHIKVIYFNG…YMAKKHHMMG (83 aa). Tyrosine 10, arginine 16, tryptophan 41, lysine 45, leucine 53, glutamate 70, serine 71, and aspartate 104 together coordinate glutathione. Residues 88–211 enclose the GST C-terminal domain; sequence TDEEYYNVEK…YLSDRAATPF (124 aa).

It belongs to the GST superfamily. Mu family. In terms of assembly, homodimer.

The enzyme catalyses RX + glutathione = an S-substituted glutathione + a halide anion + H(+). In terms of biological role, conjugation of reduced glutathione to a wide number of exogenous and endogenous hydrophobic electrophiles. Functionally, GST isoenzymes appear to play a central role in the parasite detoxification system. Other functions are also suspected including a role in increasing the solubility of haematin in the parasite gut. This Schistosoma bovis (Blood fluke) protein is Glutathione S-transferase class-mu 28 kDa isozyme.